A 375-amino-acid chain; its full sequence is Ribosomal RNA large subunit methyltransferase F (375 aa).

2 disordered regions span residues 1–39 (MKNN…AAVK) and 262–281 (NQRK…GKPT). Residues 27–38 (AKPKRVKKKAAV) show a composition bias toward basic residues.

Belongs to the methyltransferase superfamily. METTL16/RlmF family.

The protein localises to the cytoplasm. The catalysed reaction is adenosine(1618) in 23S rRNA + S-adenosyl-L-methionine = N(6)-methyladenosine(1618) in 23S rRNA + S-adenosyl-L-homocysteine + H(+). Its function is as follows. Specifically methylates the adenine in position 1618 of 23S rRNA. In Vibrio parahaemolyticus serotype O3:K6 (strain RIMD 2210633), this protein is Ribosomal RNA large subunit methyltransferase F.